A 330-amino-acid chain; its full sequence is MKIAVAGGGSWGSALAHLLAANACDVTLLVRDAVQARRINADHVNPDYLPDVVLHSSVRATVDDAEALDGAGLLLMAVPCQHFRKVLQRLRPLLPPEPVVVCANKGIEVENLCTVSEVVAQELEGTGHTFAMLSGPSFAVEVMRDMPTAVVLGCRDAATGRRLRHIFSYGLFRTYSSTDVRGVELGGAVKNVIAIAAGLADGLGFGHNARAALITRGLAEMSRLGVAMGARASTFMGLSGMGDLVLTCTGDLSRNRQVGLKLAQGMTLEEVTRSMRMVAEGVKTTEAVHTLAARLQVDLPITSAMYDVLHSGKNPRDAVRELMSRELKEE.

Residues Ser-10, Trp-11, Arg-31, and Lys-105 each contribute to the NADPH site. Sn-glycerol 3-phosphate-binding residues include Lys-105, Gly-135, and Ser-137. Ala-139 is an NADPH binding site. Residues Lys-190, Asp-243, Ser-253, Arg-254, and Asn-255 each contribute to the sn-glycerol 3-phosphate site. The active-site Proton acceptor is Lys-190. Arg-254 serves as a coordination point for NADPH. Positions 278 and 280 each coordinate NADPH.

The protein belongs to the NAD-dependent glycerol-3-phosphate dehydrogenase family.

The protein localises to the cytoplasm. The enzyme catalyses sn-glycerol 3-phosphate + NAD(+) = dihydroxyacetone phosphate + NADH + H(+). It catalyses the reaction sn-glycerol 3-phosphate + NADP(+) = dihydroxyacetone phosphate + NADPH + H(+). The protein operates within membrane lipid metabolism; glycerophospholipid metabolism. Catalyzes the reduction of the glycolytic intermediate dihydroxyacetone phosphate (DHAP) to sn-glycerol 3-phosphate (G3P), the key precursor for phospholipid synthesis. The protein is Glycerol-3-phosphate dehydrogenase [NAD(P)+] of Oleidesulfovibrio alaskensis (strain ATCC BAA-1058 / DSM 17464 / G20) (Desulfovibrio alaskensis).